Reading from the N-terminus, the 226-residue chain is Probable functional amyloid protease FapD (226 aa).

The signal sequence occupies residues M1–A18. In terms of domain architecture, Peptidase C39 spans Q50–V180. C56 is an active-site residue.

This sequence belongs to the FapD family.

Its subcellular location is the periplasm. Its function is as follows. Probable cysteine protease that is involved in processing fibril precursors. Upon overexpression of the endogenous six-gene locus (fapA-fapF) in situ, cells form large clumps during liquid growth, make large amounts of biofilm and produce amyloid fibrils. Expression of the 6 gene operon in E.coli strain BL21(DE3) induces flocculation and biofilm formation with copious extracellular fibrils. The chain is Probable functional amyloid protease FapD from Pseudomonas fluorescens.